Here is a 266-residue protein sequence, read N- to C-terminus: MDFLKFIFYGIIQGLTEFIPVSSTAHLKIISQLFGVKDPGSSLSAIIQIGSVLAIFWYFRKYIFNTINSNSKILRPSFFSNKIYKSIFIGTIPIVLIGGIVKLFVTDFSNSFFRSNFSIAVVSILMSLIMFLADISTNKFINLSNHKYRNSLFIGISQAFAIIPGVSRSGATISMALLSGWDRKDAAKFSFLLGIPSISLAAFVEFITSINEFSTFPFLPLFVGLITTFFSSLLAIDFLLKYVSSNGLKIFIYYRLVFGILIILNL.

8 helical membrane-spanning segments follow: residues 1 to 21 (MDFL…FIPV), 39 to 59 (PGSS…FWYF), 86 to 106 (SIFI…LFVT), 117 to 137 (FSIA…DIST), 153 to 173 (FIGI…GATI), 190 to 210 (SFLL…ITSI), 216 to 236 (FPFL…LLAI), and 246 to 266 (NGLK…ILNL).

This sequence belongs to the UppP family.

It localises to the cell inner membrane. The catalysed reaction is di-trans,octa-cis-undecaprenyl diphosphate + H2O = di-trans,octa-cis-undecaprenyl phosphate + phosphate + H(+). Functionally, catalyzes the dephosphorylation of undecaprenyl diphosphate (UPP). Confers resistance to bacitracin. In Prochlorococcus marinus (strain MIT 9515), this protein is Undecaprenyl-diphosphatase.